Here is a 274-residue protein sequence, read N- to C-terminus: Shikimate kinase (274 aa).

An ATP-binding site is contributed by 86-96 (PVGKGLKSSSA).

Belongs to the GHMP kinase family. Archaeal shikimate kinase subfamily.

Its subcellular location is the cytoplasm. The catalysed reaction is shikimate + ATP = 3-phosphoshikimate + ADP + H(+). It functions in the pathway metabolic intermediate biosynthesis; chorismate biosynthesis; chorismate from D-erythrose 4-phosphate and phosphoenolpyruvate: step 5/7. The polypeptide is Shikimate kinase (aroK) (Pyrococcus abyssi (strain GE5 / Orsay)).